The chain runs to 822 residues: Molybdenum cofactor sulfurase (822 aa).

N6-(pyridoxal phosphate)lysine is present on Lys245. Cys412 is a catalytic residue. Positions 658 to 814 constitute an MOSC domain; the sequence is LRLIRQSSND…LKTYSPIKAI (157 aa).

Belongs to the class-V pyridoxal-phosphate-dependent aminotransferase family. MOCOS subfamily. It depends on pyridoxal 5'-phosphate as a cofactor.

The enzyme catalyses Mo-molybdopterin + L-cysteine + AH2 = thio-Mo-molybdopterin + L-alanine + A + H2O. The protein operates within cofactor biosynthesis; molybdopterin biosynthesis. Functionally, sulfurates the molybdenum cofactor. Sulfation of molybdenum is essential for xanthine dehydrogenase (XDH) and aldehyde oxidase (ADO) enzymes in which molybdenum cofactor is liganded by 1 oxygen and 1 sulfur atom in active form. In Bombyx mori (Silk moth), this protein is Molybdenum cofactor sulfurase.